A 119-amino-acid polypeptide reads, in one-letter code: Large ribosomal subunit protein bL20 (119 aa).

The protein belongs to the bacterial ribosomal protein bL20 family.

Functionally, binds directly to 23S ribosomal RNA and is necessary for the in vitro assembly process of the 50S ribosomal subunit. It is not involved in the protein synthesizing functions of that subunit. The protein is Large ribosomal subunit protein bL20 of Dichelobacter nodosus (strain VCS1703A).